The sequence spans 368 residues: Transmembrane protein 26 (368 aa).

A run of 3 helical transmembrane segments spans residues 4–24 (LVFL…LVGV), 36–56 (YWLL…TLKF), and 65–85 (FSPA…LLEL). An N-linked (GlcNAc...) asparagine glycan is attached at Asn-110. Helical transmembrane passes span 150-170 (QTFL…GGIT), 177-197 (LLLM…ETLE), 208-228 (VYAI…DLAV), 257-277 (IGIS…ILMT), and 281-301 (VINQ…VLQL). Positions 324 to 368 (GEHGCRAQTSESGPSQRDWQNESKEGLAIPLRGSPVTSDDSHHTP) are disordered. The span at 330–341 (AQTSESGPSQRD) shows a compositional bias: polar residues.

Its subcellular location is the membrane. The chain is Transmembrane protein 26 (TMEM26) from Homo sapiens (Human).